A 311-amino-acid chain; its full sequence is Probable protein phosphatase 2C 59 (311 aa).

The span at Met1–Val14 shows a compositional bias: low complexity. The disordered stretch occupies residues Met1–Leu26. A PPM-type phosphatase domain is found at Ser33 to Phe279. Mn(2+)-binding residues include Asp69, Gly70, Asp231, and Asp270.

It belongs to the PP2C family. Interacts with the Pseudomonas syringae pv. maculicola effector HopW1-1 (via C-terminus). Requires Mg(2+) as cofactor. Mn(2+) is required as a cofactor.

It catalyses the reaction O-phospho-L-seryl-[protein] + H2O = L-seryl-[protein] + phosphate. The catalysed reaction is O-phospho-L-threonyl-[protein] + H2O = L-threonyl-[protein] + phosphate. Inhibited by sodium fluoride (NaF). Functionally, protein phosphatase that modulates defense response to pathogenic bacteria, conferring resistance and promoting salicylic acid (SA) accumulation. The protein is Probable protein phosphatase 2C 59 (WIN2) of Arabidopsis thaliana (Mouse-ear cress).